The following is a 137-amino-acid chain: Ribosome-binding factor A (137 aa).

It belongs to the RbfA family. As to quaternary structure, monomer. Binds 30S ribosomal subunits, but not 50S ribosomal subunits or 70S ribosomes.

The protein localises to the cytoplasm. One of several proteins that assist in the late maturation steps of the functional core of the 30S ribosomal subunit. Associates with free 30S ribosomal subunits (but not with 30S subunits that are part of 70S ribosomes or polysomes). Required for efficient processing of 16S rRNA. May interact with the 5'-terminal helix region of 16S rRNA. The polypeptide is Ribosome-binding factor A (Nitrobacter winogradskyi (strain ATCC 25391 / DSM 10237 / CIP 104748 / NCIMB 11846 / Nb-255)).